A 631-amino-acid polypeptide reads, in one-letter code: Nucleoside triphosphatase I (631 aa).

Positions 42–204 (FLGLDTMHSI…TMIVNLLRPK (163 aa)) constitute a Helicase ATP-binding domain. 55-62 (HDTGVGKT) is an ATP binding site. Positions 141–144 (DECH) match the DEXH box motif. The 170-residue stretch at 367–536 (KFTEVCLKIL…LFKVFKESSI (170 aa)) folds into the Helicase C-terminal domain. A binding to the cap-specific mRNA (nucleoside-2'-O-)-methyltransferase region spans residues 457–524 (DIFILDMTWN…NIIKTKSKEF (68 aa)).

Belongs to the helicase family. NPH I subfamily. Monomer. Interacts (via C-terminus) with RAP94 (via N-terminus). Interacts with the cap-specific mRNA (nucleoside-2'-O-)-methyltransferase.

The protein resides in the virion. The catalysed reaction is a ribonucleoside 5'-triphosphate + H2O = a ribonucleoside 5'-diphosphate + phosphate + H(+). In terms of biological role, DNA-dependent ATPase required for providing the needed energy to achieve the termination of early transcripts. Acts in concert with the RAP94 subunit of the virion RNA polymerase and the capping enzyme/VTF to catalyze release of UUUUUNU-containing nascent RNA from the elongation complex. NPH-I must bind ssDNA in order to exhibit ATPase activity. The protein is Nucleoside triphosphatase I (NPH1) of Erythrocebus patas (Red guenon).